We begin with the raw amino-acid sequence, 265 residues long: Ribonuclease 3 (265 aa).

Positions 34 to 157 constitute an RNase III domain; the sequence is LAVLTRKLGY…LIGAIYLDSQ (124 aa). Glutamate 70 is a binding site for Mg(2+). Residue aspartate 74 is part of the active site. Residues aspartate 143 and glutamate 146 each coordinate Mg(2+). Glutamate 146 is an active-site residue. A DRBM domain is found at 185-256; it reads DAKSRLQEWL…AELMINQLHK (72 aa).

Belongs to the ribonuclease III family. In terms of assembly, homodimer. Mg(2+) serves as cofactor.

The protein resides in the cytoplasm. The catalysed reaction is Endonucleolytic cleavage to 5'-phosphomonoester.. Digests double-stranded RNA. Involved in the processing of primary rRNA transcript to yield the immediate precursors to the large and small rRNAs (23S and 16S). Processes some mRNAs, and tRNAs when they are encoded in the rRNA operon. Processes pre-crRNA and tracrRNA of type II CRISPR loci if present in the organism. In Psychrobacter arcticus (strain DSM 17307 / VKM B-2377 / 273-4), this protein is Ribonuclease 3.